A 150-amino-acid polypeptide reads, in one-letter code: Small ribosomal subunit protein uS11 (150 aa).

The protein belongs to the universal ribosomal protein uS11 family. Part of the 30S ribosomal subunit. Interacts with proteins S7 and S18. Binds to IF-3.

Located on the platform of the 30S subunit, it bridges several disparate RNA helices of the 16S rRNA. Forms part of the Shine-Dalgarno cleft in the 70S ribosome. In Pelagibacter ubique (strain HTCC1062), this protein is Small ribosomal subunit protein uS11.